The primary structure comprises 91 residues: Gem-associated protein 7 homolog (91 aa).

Positions 18–86 (LKFYQKMASA…VVGIEYNLVQ (69 aa)) constitute a Sm domain.

It belongs to the gemin-7 family. Part of the core SMN complex at least composed of smn1, yip11/gem2, gem6, gem7 and gem8. Interacts with gem6; the interaction is direct. Interacts with gem8; the interaction is direct.

The polypeptide is Gem-associated protein 7 homolog (Schizosaccharomyces pombe (strain 972 / ATCC 24843) (Fission yeast)).